The sequence spans 713 residues: tRNA 5-methylaminomethyl-2-thiouridine biosynthesis bifunctional protein MnmC (713 aa).

The segment at 1–300 is tRNA (mnm(5)s(2)U34)-methyltransferase; the sequence is MTAEPNKPCQ…MAAILSSATP (300 aa). The segment at 306–713 is FAD-dependent cmnm(5)s(2)U34 oxidoreductase; the sequence is IGGGLASAHL…LRKLLKGKAL (408 aa).

This sequence in the N-terminal section; belongs to the methyltransferase superfamily. tRNA (mnm(5)s(2)U34)-methyltransferase family. In the C-terminal section; belongs to the DAO family. Requires FAD as cofactor.

It is found in the cytoplasm. The enzyme catalyses 5-aminomethyl-2-thiouridine(34) in tRNA + S-adenosyl-L-methionine = 5-methylaminomethyl-2-thiouridine(34) in tRNA + S-adenosyl-L-homocysteine + H(+). Catalyzes the last two steps in the biosynthesis of 5-methylaminomethyl-2-thiouridine (mnm(5)s(2)U) at the wobble position (U34) in tRNA. Catalyzes the FAD-dependent demodification of cmnm(5)s(2)U34 to nm(5)s(2)U34, followed by the transfer of a methyl group from S-adenosyl-L-methionine to nm(5)s(2)U34, to form mnm(5)s(2)U34. The polypeptide is tRNA 5-methylaminomethyl-2-thiouridine biosynthesis bifunctional protein MnmC (Shewanella baltica (strain OS155 / ATCC BAA-1091)).